A 66-amino-acid polypeptide reads, in one-letter code: DNA-directed RNA polymerase subunit Rpo10 (66 aa).

Residues Cys7, Cys10, Cys44, and Cys45 each contribute to the Zn(2+) site.

The protein belongs to the archaeal Rpo10/eukaryotic RPB10 RNA polymerase subunit family. As to quaternary structure, part of the 13-subunit RNA polymerase complex. The cofactor is Zn(2+).

The protein localises to the cytoplasm. It carries out the reaction RNA(n) + a ribonucleoside 5'-triphosphate = RNA(n+1) + diphosphate. Its function is as follows. DNA-dependent RNA polymerase (RNAP) catalyzes the transcription of DNA into RNA using the four ribonucleoside triphosphates as substrates. This chain is DNA-directed RNA polymerase subunit Rpo10, found in Sulfolobus acidocaldarius (strain ATCC 33909 / DSM 639 / JCM 8929 / NBRC 15157 / NCIMB 11770).